Here is a 328-residue protein sequence, read N- to C-terminus: DNA-directed RNA polymerase subunit alpha (328 aa).

An alpha N-terminal domain (alpha-NTD) region spans residues 1-231 (MIYQMQMPEK…EHVSLFANFS (231 aa)). Positions 252-328 (MRKMLLTRIE…MDITKYQMKG (77 aa)) are alpha C-terminal domain (alpha-CTD).

The protein belongs to the RNA polymerase alpha chain family. In terms of assembly, homodimer. The RNAP catalytic core consists of 2 alpha, 1 beta, 1 beta' and 1 omega subunit. When a sigma factor is associated with the core the holoenzyme is formed, which can initiate transcription.

The catalysed reaction is RNA(n) + a ribonucleoside 5'-triphosphate = RNA(n+1) + diphosphate. Functionally, DNA-dependent RNA polymerase catalyzes the transcription of DNA into RNA using the four ribonucleoside triphosphates as substrates. This is DNA-directed RNA polymerase subunit alpha from Chlorobium phaeobacteroides (strain BS1).